The chain runs to 313 residues: Postacrosomal sheath WW domain-binding protein (313 aa).

The GRAM domain maps to 8-87 (TESRRGALIP…GLMSDCTIEQ (80 aa)). Tandem repeats lie at residues 179–185 (YGPPPPG), 193–199 (YGTPPEG), 207–213 (YGAPPMG), 214–220 (YGAPPVG), 221–227 (YGVPPGG), 228–234 (YGVPPGG), 235–241 (YGVPPGG), 242–248 (YGAPPGG), 249–255 (YGVPPGG), 256–262 (YGAPPGG), 263–269 (YGAPPAG), and 270–276 (YGAPPAG). The tract at residues 179 to 276 (YGPPPPGYTV…PAGYGAPPAG (98 aa)) is 12 X 7 AA tandem repeat of Y-G-X-P-P-X-G. The PPxY motif 1 motif lies at 183–186 (PPGY). Over residues 254–264 (GGYGAPPGGYG) the composition is skewed to gly residues. Residues 254–313 (GGYGAPPGGYGAPPAGYGAPPAGNEALPPAYEAPSAGNTAASHRSMTAQQETSLPTTSSS) are disordered. A compositionally biased stretch (low complexity) spans 265–276 (APPAGYGAPPAG). The PPxY motif 2 motif lies at 281-284 (PPAY). The span at 289–313 (AGNTAASHRSMTAQQETSLPTTSSS) shows a compositional bias: polar residues.

As to expression, expressed in testis.

Its function is as follows. May play a role in meiotic resumption and pronuclear formation, mediated by a WW domain-signaling pathway during fertilization. The protein is Postacrosomal sheath WW domain-binding protein (WBP2NL) of Bos taurus (Bovine).